A 448-amino-acid polypeptide reads, in one-letter code: Asparagine--tRNA ligase (448 aa).

This sequence belongs to the class-II aminoacyl-tRNA synthetase family. In terms of assembly, homodimer.

It localises to the cytoplasm. It carries out the reaction tRNA(Asn) + L-asparagine + ATP = L-asparaginyl-tRNA(Asn) + AMP + diphosphate + H(+). This Streptococcus thermophilus (strain CNRZ 1066) protein is Asparagine--tRNA ligase.